The sequence spans 273 residues: MMKRQFEDVTRIVIKIGTSSLVLPTGKINLEKIDQLAFVISSLMNKGKEVILVSSGAMGFGLDILKMEKRPTNLAKQQAVSSVGQVAMMSLYSQIFAHYQTNVSQILLTRDVVVFPESLANVTNAFESLISLGIVPIVNENDAVSVDEMDHATKFGDNDRLSAVVAGITKADLLIMLSDIDGLFDKNPTIYEDAQLRSHVAVITQEIIASAGGAGSKFGTGGMLSKIQSAQMVFENKGQMVLMNGANPRDILRVLEGQPLGTWFKQIEEVRHD.

Lys15 contributes to the ATP binding site. Substrate contacts are provided by Ser55, Asp142, and Asn158. ATP-binding positions include 178–179 (SD) and 220–226 (TGGMLSK).

This sequence belongs to the glutamate 5-kinase family.

The protein resides in the cytoplasm. The catalysed reaction is L-glutamate + ATP = L-glutamyl 5-phosphate + ADP. The protein operates within amino-acid biosynthesis; L-proline biosynthesis; L-glutamate 5-semialdehyde from L-glutamate: step 1/2. Functionally, catalyzes the transfer of a phosphate group to glutamate to form L-glutamate 5-phosphate. In Streptococcus pyogenes serotype M4 (strain MGAS10750), this protein is Glutamate 5-kinase.